A 429-amino-acid polypeptide reads, in one-letter code: Hydrogenobyrinate a,c-diamide synthase (429 aa).

A GATase cobBQ-type domain is found at 240–429 (RTAVARDVAF…SFMHLIDFSE (190 aa)). Catalysis depends on cysteine 323, which acts as the Nucleophile.

Belongs to the CobB/CbiA family. The cofactor is Mg(2+).

It catalyses the reaction hydrogenobyrinate + 2 L-glutamine + 2 ATP + 2 H2O = hydrogenobyrinate a,c-diamide + 2 L-glutamate + 2 ADP + 2 phosphate + 2 H(+). It functions in the pathway cofactor biosynthesis; adenosylcobalamin biosynthesis; cob(II)yrinate a,c-diamide from precorrin-2 (aerobic route): step 9/10. Its function is as follows. Catalyzes the ATP-dependent amidation of the two carboxylate groups at positions a and c of hydrogenobyrinate, using either L-glutamine or ammonia as the nitrogen source. The polypeptide is Hydrogenobyrinate a,c-diamide synthase (Rhizobium meliloti (strain 1021) (Ensifer meliloti)).